A 362-amino-acid polypeptide reads, in one-letter code: MKAKKRIFFTGGGTGGHVFPGIAIISKLRELDTNIEFFWLGQKDSMEDKIIKEHAYIKFIAIPSGKLRRYFSLQNFTDFFKVIFGIIKSFFIIKKYKPQIIYATGGFVSSPPIIAASLLKVKSITHEMDLDPGLATKINSKFANKIHISFKESTKYFKNKNVLYTGSPIRKEFSNPNPNIIKNLTQDTKKPIISILGGSLGAEILNKLTLNIKNKIDAYFIHQCGRNLDATRENNYLRSQFFNAEEMASIIKFSNIIISRAGSGAIKEFANAGACVIFIPFVKGSRGDQIRNAKLLEEQNACFKIDEENLSESKIINIIKEILENKEKSNILRNNIKEFHNQDSSNLIANLLLKEFGKINAG.

Residues 14-16, Arg-170, Ser-199, and Gln-289 contribute to the UDP-N-acetyl-alpha-D-glucosamine site; that span reads TGG.

Belongs to the glycosyltransferase 28 family. MurG subfamily.

It localises to the cell inner membrane. It carries out the reaction di-trans,octa-cis-undecaprenyl diphospho-N-acetyl-alpha-D-muramoyl-L-alanyl-D-glutamyl-meso-2,6-diaminopimeloyl-D-alanyl-D-alanine + UDP-N-acetyl-alpha-D-glucosamine = di-trans,octa-cis-undecaprenyl diphospho-[N-acetyl-alpha-D-glucosaminyl-(1-&gt;4)]-N-acetyl-alpha-D-muramoyl-L-alanyl-D-glutamyl-meso-2,6-diaminopimeloyl-D-alanyl-D-alanine + UDP + H(+). Its pathway is cell wall biogenesis; peptidoglycan biosynthesis. Cell wall formation. Catalyzes the transfer of a GlcNAc subunit on undecaprenyl-pyrophosphoryl-MurNAc-pentapeptide (lipid intermediate I) to form undecaprenyl-pyrophosphoryl-MurNAc-(pentapeptide)GlcNAc (lipid intermediate II). In Borrelia turicatae (strain 91E135), this protein is UDP-N-acetylglucosamine--N-acetylmuramyl-(pentapeptide) pyrophosphoryl-undecaprenol N-acetylglucosamine transferase.